Here is a 320-residue protein sequence, read N- to C-terminus: Ferrochelatase (320 aa).

Positions 194 and 275 each coordinate Fe cation.

It belongs to the ferrochelatase family.

The protein localises to the cytoplasm. It carries out the reaction heme b + 2 H(+) = protoporphyrin IX + Fe(2+). The protein operates within porphyrin-containing compound metabolism; protoheme biosynthesis; protoheme from protoporphyrin-IX: step 1/1. Functionally, catalyzes the ferrous insertion into protoporphyrin IX. The polypeptide is Ferrochelatase (Vibrio parahaemolyticus serotype O3:K6 (strain RIMD 2210633)).